Here is a 691-residue protein sequence, read N- to C-terminus: Elongation factor G (691 aa).

The tr-type G domain maps to glutamate 8 to valine 282. GTP contacts are provided by residues alanine 17–threonine 24, aspartate 81–histidine 85, and asparagine 135–aspartate 138.

The protein belongs to the TRAFAC class translation factor GTPase superfamily. Classic translation factor GTPase family. EF-G/EF-2 subfamily.

Its subcellular location is the cytoplasm. Catalyzes the GTP-dependent ribosomal translocation step during translation elongation. During this step, the ribosome changes from the pre-translocational (PRE) to the post-translocational (POST) state as the newly formed A-site-bound peptidyl-tRNA and P-site-bound deacylated tRNA move to the P and E sites, respectively. Catalyzes the coordinated movement of the two tRNA molecules, the mRNA and conformational changes in the ribosome. This chain is Elongation factor G, found in Prochlorococcus marinus (strain AS9601).